The primary structure comprises 565 residues: MELEYESKRPLYIPYAGPILLEFPLLNKGSAFTEEERNHFNLQGLLPDAVETIEEQAERAYRQYQDFKNDSDKHIYLRNIQDTNETLFYRLLDSHLSEMMPIIYTPTVGEACEHFSDIYRRARGLFISYPNRDRIDDMLQNATKQNVKVIVVTDGERILGLGDQGIGGMGIPIGKLSLYTACGGISPAYTLPVVLDVGTNNPQRLNDPLYMGWRHPRISGDEYHAFVEEFIQAVKRRWPNVLLQFEDFAQNNATPLLNRYRDEICCFNDDIQGTAAVTLGSLIAASRAAGSQLRDQTVTFLGAGSAGCGIAEQIIAQMKSEGLSEDEARARVFMVDRFGLLTDKLPNLLDFQSKLVQKSENLTAWQTQSDAISLLDVVRNAKPTILIGVSGQPGLFTEELIREMHKHCPRPIVMPLSNPTSRVEARPEDIINWTEGAALVATGSPFAPVHYKEQQIPIAQCNNSYIFPGIGLGVLASGATRVTDAMLMAASRALAECSPLATDGHGALLPDIDDIQGVSKCIAMEVGKAAQLQGMAVVTSEEALSKAIEHNFWRPQYRSYKRTSF.

Tyrosine 104 (proton donor) is an active-site residue. Arginine 157 is an NAD(+) binding site. Lysine 175 functions as the Proton acceptor in the catalytic mechanism. A divalent metal cation contacts are provided by glutamate 246, aspartate 247, and aspartate 270. Residues aspartate 270 and asparagine 418 each coordinate NAD(+).

It belongs to the malic enzymes family. Homotetramer. The cofactor is Mg(2+). Mn(2+) serves as cofactor.

The catalysed reaction is (S)-malate + NAD(+) = pyruvate + CO2 + NADH. It catalyses the reaction oxaloacetate + H(+) = pyruvate + CO2. The protein is NAD-dependent malic enzyme of Serratia proteamaculans (strain 568).